Here is a 229-residue protein sequence, read N- to C-terminus: Protein MC132 (229 aa).

As to quaternary structure, interacts with host RELA (via RHD domain), ELOB, ELOC and CUL5; these interactions induce the proteasomal degradation of host RELA.

It is found in the host cytoplasm. Functionally, inhibits host NF-kappa-B activation stimulated by IL-1 and multiple PRR viral detection pathways. Targets host NF-kappa-B component RELA/p65 for ubiquitin-dependent proteasomal degradation. This is Protein MC132 (MC132) from Homo sapiens (Human).